The primary structure comprises 324 residues: Methenyltetrahydromethanopterin cyclohydrolase (324 aa).

Belongs to the MCH family.

It localises to the cytoplasm. The catalysed reaction is 5,10-methenyl-5,6,7,8-tetrahydromethanopterin + H2O = N(5)-formyl-5,6,7,8-tetrahydromethanopterin + H(+). Its pathway is one-carbon metabolism; formaldehyde degradation; formate from formaldehyde (H(4)MPT route): step 3/5. In terms of biological role, catalyzes the hydrolysis of methenyl-H(4)MPT(+) to 5-formyl-H(4)MPT. The sequence is that of Methenyltetrahydromethanopterin cyclohydrolase from Methylobacterium sp. (strain 4-46).